Reading from the N-terminus, the 239-residue chain is Ion-translocating oxidoreductase complex subunit E (239 aa).

Transmembrane regions (helical) follow at residues 41–61 (LGLGLATLLVLVCSNAAVSLV), 71–91 (LPAFVMIIAALTTCIELLMQA), 95–115 (ELYQILGIFIPLITTNCVILG), 130–150 (SFDGLLTGLGFALVLLVLGGL), and 184–204 (GFLLAILPPGAFIMLGLLIAL).

It belongs to the NqrDE/RnfAE family. The complex is composed of six subunits: RnfA, RnfB, RnfC, RnfD, RnfE and RnfG.

The protein localises to the cell inner membrane. In terms of biological role, part of a membrane-bound complex that couples electron transfer with translocation of ions across the membrane. This is Ion-translocating oxidoreductase complex subunit E from Pseudomonas paraeruginosa (strain DSM 24068 / PA7) (Pseudomonas aeruginosa (strain PA7)).